A 925-amino-acid chain; its full sequence is Translation initiation factor IF-2 (925 aa).

Disordered stretches follow at residues 52–84 (GGGKAAEGAAKAPAKAAAKGDAKTAAKGDVKAP) and 98–326 (AGGN…GVRL). Low complexity predominate over residues 57-68 (AEGAAKAPAKAA). Basic and acidic residues predominate over residues 69 to 84 (AKGDAKTAAKGDVKAP). A compositionally biased stretch (low complexity) spans 98-138 (AGGNGEAAAPPAQPGGTATTPAAQATPEAPARPGPAAARPS). 2 stretches are compositionally biased toward pro residues: residues 139-169 (APAPGQPKPPAPGQPPRPGATPGPRPGPAPK) and 193-207 (PRPVPRPGAPRPGAP). Over residues 236–296 (RPGGGRPGGP…GAAGAFGRPG (61 aa)) the composition is skewed to gly residues. The segment covering 300–309 (RRGRKSKRQK) has biased composition (basic residues). Positions 421-592 (TRPPVVTVMG…AVLLTADAAL (172 aa)) constitute a tr-type G domain. Residues 430–437 (GHVDHGKT) form a G1 region. Position 430 to 437 (430 to 437 (GHVDHGKT)) interacts with GTP. Residues 455–459 (GITQH) are G2. The segment at 480–483 (DTPG) is G3. Residues 480-484 (DTPGH) and 534-537 (NKID) contribute to the GTP site. Residues 534–537 (NKID) are G4. Positions 570 to 572 (SAK) are G5.

The protein belongs to the TRAFAC class translation factor GTPase superfamily. Classic translation factor GTPase family. IF-2 subfamily.

The protein localises to the cytoplasm. One of the essential components for the initiation of protein synthesis. Protects formylmethionyl-tRNA from spontaneous hydrolysis and promotes its binding to the 30S ribosomal subunits. Also involved in the hydrolysis of GTP during the formation of the 70S ribosomal complex. The sequence is that of Translation initiation factor IF-2 from Mycolicibacterium paratuberculosis (strain ATCC BAA-968 / K-10) (Mycobacterium paratuberculosis).